Consider the following 543-residue polypeptide: Nucleoside-triphosphatase ntp-1 (543 aa).

A helical membrane pass occupies residues 40–60; it reads VYGFLLTCTCLLLILTIIPMS. Glu-212 serves as the catalytic Proton acceptor. A helical membrane pass occupies residues 497-517; the sequence is QISNFFSFFVILIIVLAVALY.

It belongs to the GDA1/CD39 NTPase family.

Its subcellular location is the golgi apparatus membrane. It carries out the reaction a ribonucleoside 5'-triphosphate + H2O = a ribonucleoside 5'-diphosphate + phosphate + H(+). Seems to be able to hydrolyze CTP, ATP and UTP. The protein is Nucleoside-triphosphatase ntp-1 of Caenorhabditis elegans.